A 134-amino-acid polypeptide reads, in one-letter code: Protein OPG030 (134 aa).

The BACK domain maps to 88–133; that stretch reads YKENGLRNSFLRQYINNNIEEIRNTDQFLKFDVDSVCDILNNDETI.

The protein belongs to the orthopoxvirus OPG030 family.

The chain is Protein OPG030 (OPG30) from Variola virus (isolate Human/India/Ind3/1967) (VARV).